A 1080-amino-acid polypeptide reads, in one-letter code: ATP-dependent helicase/deoxyribonuclease subunit B (1080 aa).

Belongs to the helicase family. AddB/RexB type 2 subfamily. Heterodimer of AddA and RexB. The cofactor is Mg(2+).

The heterodimer acts as both an ATP-dependent DNA helicase and an ATP-dependent, dual-direction single-stranded exonuclease. Recognizes the chi site generating a DNA molecule suitable for the initiation of homologous recombination. This subunit has 5' -&gt; 3' nuclease activity but not helicase activity. The protein is ATP-dependent helicase/deoxyribonuclease subunit B of Streptococcus mutans serotype c (strain ATCC 700610 / UA159).